The following is a 36-amino-acid chain: Pancreatic polypeptide (36 aa).

Tyr36 bears the Tyrosine amide mark.

Belongs to the NPY family.

It is found in the secreted. Its function is as follows. Hormone secreted by pancreatic cells that acts as a regulator of pancreatic and gastrointestinal functions. The sequence is that of Pancreatic polypeptide (PPY) from Meleagris gallopavo (Wild turkey).